Here is a 292-residue protein sequence, read N- to C-terminus: Phosphatidylglycerol--prolipoprotein diacylglyceryl transferase (292 aa).

The next 7 membrane-spanning stretches (helical) occupy residues 21-41 (VSLH…MWLA), 60-80 (LLYA…VLFY), 98-118 (GGMS…VFAH), 124-144 (FFQV…AGRL), 198-218 (SQLY…NLFI), 225-245 (GAVS…VEFF), and 258-278 (ISMG…MMIW). Position 143 (R143) interacts with a 1,2-diacyl-sn-glycero-3-phospho-(1'-sn-glycerol).

It belongs to the Lgt family.

The protein resides in the cell inner membrane. It carries out the reaction L-cysteinyl-[prolipoprotein] + a 1,2-diacyl-sn-glycero-3-phospho-(1'-sn-glycerol) = an S-1,2-diacyl-sn-glyceryl-L-cysteinyl-[prolipoprotein] + sn-glycerol 1-phosphate + H(+). It functions in the pathway protein modification; lipoprotein biosynthesis (diacylglyceryl transfer). Functionally, catalyzes the transfer of the diacylglyceryl group from phosphatidylglycerol to the sulfhydryl group of the N-terminal cysteine of a prolipoprotein, the first step in the formation of mature lipoproteins. The protein is Phosphatidylglycerol--prolipoprotein diacylglyceryl transferase of Erwinia tasmaniensis (strain DSM 17950 / CFBP 7177 / CIP 109463 / NCPPB 4357 / Et1/99).